Here is a 240-residue protein sequence, read N- to C-terminus: Uridylate kinase (240 aa).

14–17 (KLSG) contacts ATP. UMP is bound at residue glycine 56. ATP is bound by residues glycine 57 and arginine 61. Residues aspartate 76 and 137 to 144 (TGNPFFTT) contribute to the UMP site. Residues threonine 164, tyrosine 170, and aspartate 173 each contribute to the ATP site.

This sequence belongs to the UMP kinase family. As to quaternary structure, homohexamer.

It localises to the cytoplasm. The enzyme catalyses UMP + ATP = UDP + ADP. Its pathway is pyrimidine metabolism; CTP biosynthesis via de novo pathway; UDP from UMP (UMPK route): step 1/1. With respect to regulation, inhibited by UTP. Catalyzes the reversible phosphorylation of UMP to UDP. This Paracidovorax citrulli (strain AAC00-1) (Acidovorax citrulli) protein is Uridylate kinase.